A 361-amino-acid polypeptide reads, in one-letter code: MHPPRPTTDLPEDFYIPMALDAPNITALSPFLVPQTHLGSPGLFRAMAAFMFLLIALGVPINTLTIFCTARFRKLRSHLNYILVNLALANLLVILVGSTTACYSFSQMYFALGPTACKIEGFAATLGGMVSLWSLAVVAFERFLVICKPLGNFTFRGSHAVLGCVATWVLGFVASAPPLFGWSRYIPEGLQCSCGPDWYTTDNKWHNESYVLFLFTFCFGVPLAIIVFSYGRLLITLRAVARQQEQSATTQKADREVTKMVVVMVLGFLVCWAPYTAFALWVVTHRGRSFEVGLASIPSVFSKSSTVYNPVIYVLMNKQFRSCMLKLLFCGRSPFGDDEDVSGSSQATQVSSVSSSHVAPA.

Topologically, residues 1-43 (MHPPRPTTDLPEDFYIPMALDAPNITALSPFLVPQTHLGSPGL) are extracellular. Residue Asn-24 is glycosylated (N-linked (GlcNAc...) asparagine). Residues 44–68 (FRAMAAFMFLLIALGVPINTLTIFC) form a helical membrane-spanning segment. The Cytoplasmic portion of the chain corresponds to 69-80 (TARFRKLRSHLN). Residues 81 to 106 (YILVNLALANLLVILVGSTTACYSFS) form a helical membrane-spanning segment. The Extracellular segment spans residues 107–120 (QMYFALGPTACKIE). A disulfide bridge links Cys-117 with Cys-194. The chain crosses the membrane as a helical span at residues 121-140 (GFAATLGGMVSLWSLAVVAF). Topologically, residues 141-159 (ERFLVICKPLGNFTFRGSH) are cytoplasmic. The chain crosses the membrane as a helical span at residues 160-183 (AVLGCVATWVLGFVASAPPLFGWS). Residues 184–209 (RYIPEGLQCSCGPDWYTTDNKWHNES) are Extracellular-facing. The helical transmembrane segment at 210–237 (YVLFLFTFCFGVPLAIIVFSYGRLLITL) threads the bilayer. The Cytoplasmic segment spans residues 238–259 (RAVARQQEQSATTQKADREVTK). A helical membrane pass occupies residues 260 to 283 (MVVVMVLGFLVCWAPYTAFALWVV). At 284–291 (THRGRSFE) the chain is on the extracellular side. The helical transmembrane segment at 292–316 (VGLASIPSVFSKSSTVYNPVIYVLM) threads the bilayer. Lys-303 bears the N6-(retinylidene)lysine mark. Topologically, residues 317–361 (NKQFRSCMLKLLFCGRSPFGDDEDVSGSSQATQVSSVSSSHVAPA) are cytoplasmic. The segment at 338–361 (DEDVSGSSQATQVSSVSSSHVAPA) is disordered. Over residues 342–361 (SGSSQATQVSSVSSSHVAPA) the composition is skewed to low complexity.

The protein belongs to the G-protein coupled receptor 1 family. Opsin subfamily. In terms of processing, phosphorylated on some or all of the serine and threonine residues present in the C-terminal region. As to expression, the color pigments are found in the cone photoreceptor cells.

The protein resides in the membrane. Functionally, visual pigments are the light-absorbing molecules that mediate vision. They consist of an apoprotein, opsin, covalently linked to cis-retinal. The protein is Blue-sensitive opsin of Gallus gallus (Chicken).